Consider the following 523-residue polypeptide: DNA-directed RNA polymerase subunit Rpo2N (523 aa).

The interval 501-523 is disordered; it reads SSMGVEGIPGISMETTSTTSADD. Positions 513-523 are enriched in polar residues; the sequence is METTSTTSADD.

It belongs to the RNA polymerase beta chain family. As to quaternary structure, part of the RNA polymerase complex.

It localises to the cytoplasm. The catalysed reaction is RNA(n) + a ribonucleoside 5'-triphosphate = RNA(n+1) + diphosphate. DNA-dependent RNA polymerase (RNAP) catalyzes the transcription of DNA into RNA using the four ribonucleoside triphosphates as substrates. The Rpo2 subunit (Rpo2N and Rpo2C in this organism) is implicated in DNA promoter recognition and in nucleotide binding. This Halobacterium salinarum (strain ATCC 29341 / DSM 671 / R1) protein is DNA-directed RNA polymerase subunit Rpo2N.